The following is a 440-amino-acid chain: Thymidine phosphorylase (440 aa).

The protein belongs to the thymidine/pyrimidine-nucleoside phosphorylase family. As to quaternary structure, homodimer.

It catalyses the reaction thymidine + phosphate = 2-deoxy-alpha-D-ribose 1-phosphate + thymine. Its pathway is pyrimidine metabolism; dTMP biosynthesis via salvage pathway; dTMP from thymine: step 1/2. Functionally, the enzymes which catalyze the reversible phosphorolysis of pyrimidine nucleosides are involved in the degradation of these compounds and in their utilization as carbon and energy sources, or in the rescue of pyrimidine bases for nucleotide synthesis. The polypeptide is Thymidine phosphorylase (Salmonella paratyphi A (strain ATCC 9150 / SARB42)).